The chain runs to 231 residues: 7-cyano-7-deazaguanine synthase (231 aa).

Position 8 to 18 (8 to 18) interacts with ATP; that stretch reads FSGGQDSTTCL. Zn(2+) is bound by residues cysteine 188, cysteine 197, cysteine 200, and cysteine 203.

The protein belongs to the QueC family. Zn(2+) is required as a cofactor.

The enzyme catalyses 7-carboxy-7-deazaguanine + NH4(+) + ATP = 7-cyano-7-deazaguanine + ADP + phosphate + H2O + H(+). It participates in purine metabolism; 7-cyano-7-deazaguanine biosynthesis. Its function is as follows. Catalyzes the ATP-dependent conversion of 7-carboxy-7-deazaguanine (CDG) to 7-cyano-7-deazaguanine (preQ(0)). The sequence is that of 7-cyano-7-deazaguanine synthase from Salmonella arizonae (strain ATCC BAA-731 / CDC346-86 / RSK2980).